Consider the following 96-residue polypeptide: MAAVWREGDDLLLRLYIQPKASRDSIVGLHGEELKVAITAPPIDGKANAHLSKYLAKLCKVAKGSVVVEKGELGRHKQVRILQPSQIPAEIAALIE.

It belongs to the UPF0235 family.

The sequence is that of UPF0235 protein VCM66_0443 from Vibrio cholerae serotype O1 (strain M66-2).